The following is a 608-amino-acid chain: Albumin 2 (608 aa).

The first 14 residues, 1–14 (MQWLSVCSLLVLLS), serve as a signal peptide directing secretion. Positions 15–18 (VLSR) are excised as a propeptide. Albumin domains follow at residues 19–205 (SQAQ…TFQH), 206–398 (AIAK…AGSD), and 402–600 (KITD…KLVS). Disulfide bonds link Cys-26–Cys-72, Cys-71–Cys-80, Cys-93–Cys-108, Cys-107–Cys-118, Cys-142–Cys-187, Cys-186–Cys-195, Cys-218–Cys-264, Cys-263–Cys-271, Cys-283–Cys-299, Cys-298–Cys-309, Cys-336–Cys-381, Cys-380–Cys-389, Cys-414–Cys-460, Cys-459–Cys-471, Cys-484–Cys-500, Cys-499–Cys-510, Cys-537–Cys-582, and Cys-581–Cys-590. Asn-501 carries an N-linked (GlcNAc...) asparagine glycan.

It belongs to the ALB/AFP/VDB family. Plasma.

The protein localises to the secreted. Its function is as follows. Binds water, Ca(2+), Na(+), K(+), fatty acids, hormones, bilirubin and drugs. Its main function is the regulation of the colloidal osmotic pressure of blood. This is Albumin 2 (alb2) from Salmo salar (Atlantic salmon).